A 610-amino-acid polypeptide reads, in one-letter code: MTNFSESEISEFKASFNQFDENGDGQISALELQKILTKCGEKVTGVEVRDMIKEVDTDGNGSIDFKEFLQVMQKARQHSANASPAFASAVKKVGAVNTIGGYSGSTASGVQHSYSDEEKVAYIDWINNCLAKDVDLKSRLPIPEDGDKFFAACNDGLLLCKLINDAVPDTIDERVLNKKNLNAFRINENQVLCINSAKAIGCNVVNIGAGDLVEGRAHLIMGLTWQIIKIGLFARINLTNHPELYRLLHDGETIEDLLKLPVEEILLRWFNYHLAAAGSQRRVKNFSGDIKDSECYTILLKQIAPKDAGVETSALNISNLDQRAVKVLENADKLGCKKFLKPKDIVTGFQKLNLAFVANLFNTHPALEPVEDVVIIEETREEKTFRNWMNSLGVDPFVNNLYEGTYDGLILIQLFDKIYPGLVDHKKVNYPPYKAMGAEMKKIENCNYAIQLGKDCKYSLVGIDGKNVYDKNKTLTLSILWQLMRGHVISILTALSGSGKPIADADIVNWTNSKLSAAGKKQISGFKDSTISTGIPILDVIEAVRPGSVDPALVATSGSAEDNLLNAKLAVSTARKVGAVVFALPEDIVEVKPKMVLTLFASLWQVEMTK.

EF-hand domains are found at residues 7-42 and 43-78; these read SEIS…CGEK and VTGV…ARQH. Residues aspartate 20, asparagine 22, aspartate 24, glutamine 26, glutamate 31, aspartate 56, aspartate 58, asparagine 60, serine 62, and glutamate 67 each contribute to the Ca(2+) site. Actin-binding stretches follow at residues 102 to 365 and 366 to 608; these read YSGS…NTHP and ALEP…QVEM. Calponin-homology (CH) domains are found at residues 116–232, 260–365, 379–488, and 501–608; these read DEEK…KIGL, LPVE…NTHP, TREE…RGHV, and PIAD…QVEM.

Binds to actin. The sequence is that of Fimbrin (fimA) from Dictyostelium discoideum (Social amoeba).